The primary structure comprises 152 residues: Large ribosomal subunit protein bL9 (152 aa).

This sequence belongs to the bacterial ribosomal protein bL9 family.

Binds to the 23S rRNA. The protein is Large ribosomal subunit protein bL9 of Synechococcus elongatus (strain ATCC 33912 / PCC 7942 / FACHB-805) (Anacystis nidulans R2).